The chain runs to 61 residues: UPF0434 protein Pfl01_4174 (61 aa).

It belongs to the UPF0434 family.

This chain is UPF0434 protein Pfl01_4174, found in Pseudomonas fluorescens (strain Pf0-1).